The sequence spans 150 residues: UPF0735 ACT domain-containing protein Csac_0995 (150 aa).

An ACT domain is found at 72–147; the sequence is TLALVLQDVP…GVKKIEILGR (76 aa).

It belongs to the UPF0735 family.

This chain is UPF0735 ACT domain-containing protein Csac_0995, found in Caldicellulosiruptor saccharolyticus (strain ATCC 43494 / DSM 8903 / Tp8T 6331).